Reading from the N-terminus, the 371-residue chain is Serine/threonine-protein kinase 17B (371 aa).

Positions 33–293 constitute a Protein kinase domain; it reads TLTPKELGRG…AESCLSHSWL (261 aa). ATP is bound by residues 39–47 and lysine 62; that span reads LGRGKFAVV. Residue aspartate 158 is the Proton acceptor of the active site. The disordered stretch occupies residues 308–345; that stretch reads SESSQTQDLSLRSSEDKTPKSCNGSCGDREDKENIPED. Polar residues predominate over residues 309-319; sequence ESSQTQDLSLR.

The protein belongs to the protein kinase superfamily. CAMK Ser/Thr protein kinase family. DAP kinase subfamily. Interacts with CHP1; the interaction induces CHP1 to translocate from the Golgi to the nucleus. Post-translationally, autophosphorylated. As to expression, highly expressed in thymus, spleen, and testis, lower levels present in the brain.

The protein localises to the nucleus. Its subcellular location is the cell membrane. It is found in the endoplasmic reticulum-Golgi intermediate compartment. The catalysed reaction is L-seryl-[protein] + ATP = O-phospho-L-seryl-[protein] + ADP + H(+). It catalyses the reaction L-threonyl-[protein] + ATP = O-phospho-L-threonyl-[protein] + ADP + H(+). In terms of biological role, acts as a positive regulator of apoptosis. Phosphorylates myosin light chains. In Rattus norvegicus (Rat), this protein is Serine/threonine-protein kinase 17B (Stk17b).